The chain runs to 414 residues: ORC1-type DNA replication protein 1 (414 aa).

ATP-binding positions include 70-74 (TGKTA), tyrosine 213, and arginine 225.

The protein belongs to the CDC6/cdc18 family.

In terms of biological role, involved in regulation of DNA replication. This is ORC1-type DNA replication protein 1 (cdc6-1) from Methanosarcina mazei (strain ATCC BAA-159 / DSM 3647 / Goe1 / Go1 / JCM 11833 / OCM 88) (Methanosarcina frisia).